Here is a 269-residue protein sequence, read N- to C-terminus: Thiazole synthase (269 aa).

Catalysis depends on lysine 95, which acts as the Schiff-base intermediate with DXP. Residues glycine 156, 182 to 183 (AG), and 204 to 205 (NT) each bind 1-deoxy-D-xylulose 5-phosphate.

The protein belongs to the ThiG family. As to quaternary structure, homotetramer. Forms heterodimers with either ThiH or ThiS.

The protein resides in the cytoplasm. It carries out the reaction [ThiS sulfur-carrier protein]-C-terminal-Gly-aminoethanethioate + 2-iminoacetate + 1-deoxy-D-xylulose 5-phosphate = [ThiS sulfur-carrier protein]-C-terminal Gly-Gly + 2-[(2R,5Z)-2-carboxy-4-methylthiazol-5(2H)-ylidene]ethyl phosphate + 2 H2O + H(+). It participates in cofactor biosynthesis; thiamine diphosphate biosynthesis. In terms of biological role, catalyzes the rearrangement of 1-deoxy-D-xylulose 5-phosphate (DXP) to produce the thiazole phosphate moiety of thiamine. Sulfur is provided by the thiocarboxylate moiety of the carrier protein ThiS. In vitro, sulfur can be provided by H(2)S. This chain is Thiazole synthase, found in Shewanella frigidimarina (strain NCIMB 400).